We begin with the raw amino-acid sequence, 146 residues long: NADH-quinone oxidoreductase subunit A (146 aa).

The next 3 membrane-spanning stretches (helical) occupy residues 16–36, 68–88, and 98–118; these read FAIF…GGWF, FYLV…LFAW, and VGFV…VYLV.

It belongs to the complex I subunit 3 family. In terms of assembly, NDH-1 is composed of 13 different subunits. Subunits NuoA, H, J, K, L, M, N constitute the membrane sector of the complex.

The protein resides in the cell inner membrane. It catalyses the reaction a quinone + NADH + 5 H(+)(in) = a quinol + NAD(+) + 4 H(+)(out). In terms of biological role, NDH-1 shuttles electrons from NADH, via FMN and iron-sulfur (Fe-S) centers, to quinones in the respiratory chain. The immediate electron acceptor for the enzyme in this species is believed to be ubiquinone. Couples the redox reaction to proton translocation (for every two electrons transferred, four hydrogen ions are translocated across the cytoplasmic membrane), and thus conserves the redox energy in a proton gradient. This chain is NADH-quinone oxidoreductase subunit A, found in Enterobacter sp. (strain 638).